The following is a 306-amino-acid chain: tRNA dimethylallyltransferase 1 (306 aa).

ATP is bound at residue 13-20 (GPTASGKT). 15-20 (TASGKT) is a binding site for substrate. Residues 38 to 41 (DSRQ) form an interaction with substrate tRNA region.

The protein belongs to the IPP transferase family. As to quaternary structure, monomer. The cofactor is Mg(2+).

The enzyme catalyses adenosine(37) in tRNA + dimethylallyl diphosphate = N(6)-dimethylallyladenosine(37) in tRNA + diphosphate. In terms of biological role, catalyzes the transfer of a dimethylallyl group onto the adenine at position 37 in tRNAs that read codons beginning with uridine, leading to the formation of N6-(dimethylallyl)adenosine (i(6)A). The sequence is that of tRNA dimethylallyltransferase 1 from Azobacteroides pseudotrichonymphae genomovar. CFP2.